The sequence spans 309 residues: 2-dehydro-3-deoxygluconokinase (309 aa).

Substrate contacts are provided by residues G34 to N38, Y89, Y103 to R105, and R167. Residues N165–R167, S193, K219–A225, G248–D251, and N275 each bind ATP. D251 is a substrate binding site. Catalysis depends on D251, which acts as the Proton acceptor. D287 provides a ligand contact to substrate.

This sequence belongs to the carbohydrate kinase pfkB family. In terms of assembly, homohexamer; trimer of dimers.

The enzyme catalyses 2-dehydro-3-deoxy-D-gluconate + ATP = 2-dehydro-3-deoxy-6-phospho-D-gluconate + ADP + H(+). It participates in carbohydrate acid metabolism; 2-dehydro-3-deoxy-D-gluconate degradation; D-glyceraldehyde 3-phosphate and pyruvate from 2-dehydro-3-deoxy-D-gluconate: step 1/2. Involved in the degradation of glucose via the semi-phosphorylative Entner-Doudoroff pathway. Catalyzes the phosphorylation of 2-keto-3-deoxygluconate (KDG) to produce 2-keto-3-deoxy-6-phosphogluconate (KDPG). This is 2-dehydro-3-deoxygluconokinase (kdgK) from Thermus thermophilus (strain ATCC 27634 / DSM 579 / HB8).